Reading from the N-terminus, the 106-residue chain is Large ribosomal subunit protein bL21 (106 aa).

It belongs to the bacterial ribosomal protein bL21 family. Part of the 50S ribosomal subunit. Contacts protein L20.

In terms of biological role, this protein binds to 23S rRNA in the presence of protein L20. The chain is Large ribosomal subunit protein bL21 from Streptomyces coelicolor (strain ATCC BAA-471 / A3(2) / M145).